Here is a 163-residue protein sequence, read N- to C-terminus: uncharacterized protein (163 aa).

The tract at residues 1 to 54 is disordered; that stretch reads MGKSARLRRSQTSSPENVLLGKDSSDDPYRSDSETESNSSSGTESNMSSDSTTS. A compositionally biased stretch (basic and acidic residues) spans 23–33; sequence DSSDDPYRSDS. The span at 36 to 52 shows a compositional bias: low complexity; that stretch reads ESNSSSGTESNMSSDST. A coiled-coil region spans residues 69 to 143; that stretch reads LRTELAEMEM…VEELESSTRE (75 aa).

This is an uncharacterized protein from Arabidopsis thaliana (Mouse-ear cress).